Reading from the N-terminus, the 299-residue chain is Streptogrisin-B (299 aa).

Residues 1–38 form the signal peptide; that stretch reads MRIKRTSNRSNAARRVRTTAVLAGLAAVAALAVPTANA. A propeptide spanning residues 39 to 114 is cleaved from the precursor; that stretch reads ETPRTFSANQ…ERTPGKFTKL (76 aa). C128 and C148 are joined by a disulfide. Residues H147, D177, and S255 each act as charge relay system in the active site. The cysteines at positions 249 and 276 are disulfide-linked.

Belongs to the peptidase S1 family. In terms of assembly, monomer.

It carries out the reaction Hydrolysis of proteins with trypsin-like specificity.. Its function is as follows. Has a primary specificity for large aliphatic or aromatic amino acids. This Streptomyces griseus protein is Streptogrisin-B (sprB).